The following is a 91-amino-acid chain: Cytochrome c-554(547) (91 aa).

Heme c contacts are provided by cysteine 15, cysteine 18, histidine 19, and methionine 64.

As to quaternary structure, monomer. In terms of processing, binds 1 heme c group covalently per subunit.

In Halothiobacillus neapolitanus (Thiobacillus neapolitanus), this protein is Cytochrome c-554(547).